The primary structure comprises 131 residues: Lactose permease (131 aa).

The Cytoplasmic segment spans residues 1-13; that stretch reads MKFSELAPRERHN. Residues 14 to 34 traverse the membrane as a helical segment; the sequence is FVYFLLFFFFYHFIMSAYFPF. The Periplasmic portion of the chain corresponds to 35 to 50; that stretch reads FPVWLADVNHLTKTET. Residues 51 to 71 form a helical membrane-spanning segment; sequence GIVFSSISLFAIIFQPVFGLM. Residues 72–80 lie on the Cytoplasmic side of the membrane; the sequence is SDKLGLRKH. Residues 81–101 form a helical membrane-spanning segment; the sequence is LLWTITVLLILFAPFFIFVFS. A topological domain (periplasmic) is located at residue proline 102. A helical membrane pass occupies residues 103–123; it reads LLQMNIIAGSLVGGIYLGIVF. Residues 124–131 lie on the Cytoplasmic side of the membrane; sequence STAPGVGS.

The protein belongs to the major facilitator superfamily. Oligosaccharide:H(+) symporter (OHS) (TC 2.A.1.5) family.

The protein resides in the cell inner membrane. It carries out the reaction lactose(in) + H(+)(in) = lactose(out) + H(+)(out). Responsible for transport of beta-galactosides into the cell, with the concomitant import of a proton (symport system). This chain is Lactose permease (lacY), found in Klebsiella pneumoniae.